Consider the following 299-residue polypeptide: Putative arsenical pump-driving ATPase 2 (299 aa).

8–15 serves as a coordination point for ATP; that stretch reads GKGGVGKT.

The protein belongs to the arsA ATPase family.

The enzyme catalyses arsenite(in) + ATP + H2O = arsenite(out) + ADP + phosphate + H(+). Functionally, anion-transporting ATPase. Catalyzes the extrusion of arsenite. The sequence is that of Putative arsenical pump-driving ATPase 2 (arsA2) from Aquifex aeolicus (strain VF5).